A 386-amino-acid chain; its full sequence is Putative gustatory receptor 22b (386 aa).

Residues 1-48 (MFGSSREIRPYLARQMLKTTLYGSWLLGIFPFTLDSGKRIRQLRRSRC) are Cytoplasmic-facing. Residues 49 to 69 (LTLYGLVLNYFLIFTLIRLAF) form a helical membrane-spanning segment. At 70–89 (EYRKHKLEAFKRNPVLEMIN) the chain is on the extracellular side. Residues 90–110 (VVIGIINVLSALIVHFMNFWG) traverse the membrane as a helical segment. Residues 111–155 (SRKVGEICNELLILEYQDFEGLNGRNCPNFNCFVIQKCLTILGQL) are Cytoplasmic-facing. A helical transmembrane segment spans residues 156-176 (LSFFTLNFALPGLEFHICLVL). Residues 177 to 178 (LS) are Extracellular-facing. A helical membrane pass occupies residues 179–199 (CLMEFSLNLNIMHYHVGVLLI). At 200-254 (YRYVWLINEQLKDLVSQLKLNPETDFSRIHQFLSLYKRLLELNRKLVIAYEYQMT) the chain is on the cytoplasmic side. Residues 255-275 (LFIIAQLSGNIVVIYFLIVYG) form a helical membrane-spanning segment. Residues 276 to 282 (LSMRTYS) are Extracellular-facing. A helical membrane pass occupies residues 283 to 303 (IFLVAFPNSLLINIWDFWLCI). Over 304-363 (AACDLTEKAGDETAIILKIFSDLEHRDDKLEMSVNEFAWLCSHRKFRFQLCGLFSMNCRM) the chain is Cytoplasmic. Residues 364–384 (GFKMIITTFLYLVYLVQFDYM) traverse the membrane as a helical segment. The Extracellular segment spans residues 385-386 (NL).

This sequence belongs to the insect chemoreceptor superfamily. Gustatory receptor (GR) family. Gr22e subfamily. In terms of tissue distribution, expressed in taste bristles in the foreleg and labial palps. In larvae, is expressed in neurons of the dorsal and posterior pharyngeal sense organs. Expressed in taste neurons that mediate sensitivity to bitter compounds.

Its subcellular location is the cell membrane. Functionally, probable gustatory receptor which mediates acceptance or avoidance behavior, depending on its substrates. Seems to be involved in the sensing of bitter taste since it is expressed in neurons that mediate sensitivity to bitter compounds. The chain is Putative gustatory receptor 22b from Drosophila melanogaster (Fruit fly).